The chain runs to 226 residues: UPF0758 protein PsycPRwf_0491 (226 aa).

An MPN domain is found at 102–224; the sequence is SLNRSQVVKD…TLSFAETATA (123 aa). His173, His175, and Asp186 together coordinate Zn(2+). The JAMM motif motif lies at 173–186; that stretch reads HNHPNQDATPSAAD.

This sequence belongs to the UPF0758 family.

This Psychrobacter sp. (strain PRwf-1) protein is UPF0758 protein PsycPRwf_0491.